The following is a 128-amino-acid chain: Large ribosomal subunit protein uL22 (128 aa).

A disordered region spans residues 1–20; that stretch reads MANGHRSQIKRERNAVKDTR. Over residues 9–20 the composition is skewed to basic and acidic residues; that stretch reads IKRERNAVKDTR.

It belongs to the universal ribosomal protein uL22 family. In terms of assembly, part of the 50S ribosomal subunit.

Functionally, this protein binds specifically to 23S rRNA; its binding is stimulated by other ribosomal proteins, e.g. L4, L17, and L20. It is important during the early stages of 50S assembly. It makes multiple contacts with different domains of the 23S rRNA in the assembled 50S subunit and ribosome. Its function is as follows. The globular domain of the protein is located near the polypeptide exit tunnel on the outside of the subunit, while an extended beta-hairpin is found that lines the wall of the exit tunnel in the center of the 70S ribosome. This is Large ribosomal subunit protein uL22 from Lachnospira eligens (strain ATCC 27750 / DSM 3376 / VPI C15-48 / C15-B4) (Eubacterium eligens).